We begin with the raw amino-acid sequence, 692 residues long: Methionine--tRNA ligase (692 aa).

Positions 12 to 22 (PYANGSFHIGH) match the 'HIGH' region motif. Zn(2+) contacts are provided by Cys-143, Cys-146, Cys-156, and Cys-159. Residues 341-345 (KMSKS) carry the 'KMSKS' region motif. An ATP-binding site is contributed by Lys-344. Residues 586–692 (DFAKIDLRIA…PGAQPGMRVR (107 aa)) form the tRNA-binding domain.

This sequence belongs to the class-I aminoacyl-tRNA synthetase family. MetG type 1 subfamily. As to quaternary structure, homodimer. It depends on Zn(2+) as a cofactor.

It localises to the cytoplasm. The catalysed reaction is tRNA(Met) + L-methionine + ATP = L-methionyl-tRNA(Met) + AMP + diphosphate. In terms of biological role, is required not only for elongation of protein synthesis but also for the initiation of all mRNA translation through initiator tRNA(fMet) aminoacylation. The protein is Methionine--tRNA ligase of Bordetella bronchiseptica (strain ATCC BAA-588 / NCTC 13252 / RB50) (Alcaligenes bronchisepticus).